The primary structure comprises 78 residues: UPF0349 protein SAHV_0934 (78 aa).

This sequence belongs to the UPF0349 family.

The sequence is that of UPF0349 protein SAHV_0934 from Staphylococcus aureus (strain Mu3 / ATCC 700698).